The following is a 387-amino-acid chain: MSDINEKLPELLQDAVLKASVPIPDDFVKVQGIDYSKPEATNMRATDLIEAMKTMGFQASSVGTACEIIDSMRSWRGKHIDELDDHEKKGCFDEEGYQKTTIFMGYTSNLISSGVRETLRYLVQHKMVDAVVTSAGGVEEDLIKCLAPTYLGEFALKGKSLRDQGMNRIGNLLVPNDNYCKFEEWIVPILDKMLEEQDEYVKKHGADCLEANQDVDSPIWTPSKMIDRFGKEINDESSVLYWAHKNKIPIFCPSLTDGSIGDMLFFHTFKASPKQLRVDIVGDIRKINSMSMAAYRAGMIILGGGLIKHHIANACLMRNGADYAVYINTGQEYDGSDAGARPDEAVSWGKIKAEAKSVKLFADVTTVLPLIVAATFASGKPIKKVKN.

Residues 108–112, 134–136, Glu140, and Asp257 contribute to the NAD(+) site; these read SNLIS and SAG. 139-140 contributes to the spermidine binding site; sequence EE. Asp262 provides a ligand contact to spermidine. Gly304 provides a ligand contact to NAD(+). His309 contacts spermidine. Residue 329–330 participates in NAD(+) binding; the sequence is TG. Residues 335–337 and 344–350 each bind spermidine; these read GSD and EAVSWGK. The Nucleophile role is filled by Lys350. 363-364 provides a ligand contact to NAD(+); the sequence is DV.

It belongs to the deoxyhypusine synthase family. As to quaternary structure, homotetramer. Requires NAD(+) as cofactor.

It catalyses the reaction [eIF5A protein]-L-lysine + spermidine = [eIF5A protein]-deoxyhypusine + propane-1,3-diamine. Its pathway is protein modification; eIF5A hypusination. Its function is as follows. Catalyzes the NAD-dependent oxidative cleavage of spermidine and the subsequent transfer of the butylamine moiety of spermidine to the epsilon-amino group of a specific lysine residue of the eIF-5A precursor protein to form the intermediate deoxyhypusine residue. The polypeptide is Deoxyhypusine synthase (Saccharomyces cerevisiae (strain ATCC 204508 / S288c) (Baker's yeast)).